We begin with the raw amino-acid sequence, 608 residues long: Glutamine--fructose-6-phosphate aminotransferase [isomerizing] (608 aa).

Cys2 acts as the Nucleophile; for GATase activity in catalysis. Residues 2-217 form the Glutamine amidotransferase type-2 domain; the sequence is CGIVGIVGNQ…DGDWAVIGKT (216 aa). SIS domains are found at residues 281–422 and 456–598; these read ISDA…ARGT and LSRE…VDQP. The active-site For Fru-6P isomerization activity is the Lys603.

In terms of assembly, homodimer.

It is found in the cytoplasm. It catalyses the reaction D-fructose 6-phosphate + L-glutamine = D-glucosamine 6-phosphate + L-glutamate. Catalyzes the first step in hexosamine metabolism, converting fructose-6P into glucosamine-6P using glutamine as a nitrogen source. The chain is Glutamine--fructose-6-phosphate aminotransferase [isomerizing] from Rhizobium meliloti (strain 1021) (Ensifer meliloti).